The sequence spans 143 residues: Large ribosomal subunit protein uL11 (143 aa).

It belongs to the universal ribosomal protein uL11 family. Part of the ribosomal stalk of the 50S ribosomal subunit. Interacts with L10 and the large rRNA to form the base of the stalk. L10 forms an elongated spine to which L12 dimers bind in a sequential fashion forming a multimeric L10(L12)X complex. In terms of processing, one or more lysine residues are methylated.

In terms of biological role, forms part of the ribosomal stalk which helps the ribosome interact with GTP-bound translation factors. The chain is Large ribosomal subunit protein uL11 from Bordetella parapertussis (strain 12822 / ATCC BAA-587 / NCTC 13253).